The primary structure comprises 145 residues: MVVIQNIIHDSSINEYDLSNTLQEVIKELDRGESELLIRLVNETEIKNLNKVYRHQDKLTNVLSFQSDLPIEIDEAVLGDVVICTQVVLKESIEQHKSFNNHLTHMAIHGMLHLLGYDHIDTKDAQQMENLEIKILAKIGINNPY.

3 residues coordinate Zn(2+): His109, His113, and His119.

The protein belongs to the endoribonuclease YbeY family. Zn(2+) serves as cofactor.

The protein localises to the cytoplasm. Functionally, single strand-specific metallo-endoribonuclease involved in late-stage 70S ribosome quality control and in maturation of the 3' terminus of the 16S rRNA. This Ruthia magnifica subsp. Calyptogena magnifica protein is Endoribonuclease YbeY.